We begin with the raw amino-acid sequence, 558 residues long: Oligo-1,6-glucosidase (558 aa).

The Ca(2+) site is built by D21, N23, D25, and D29. The Nucleophile role is filled by D199. E255 (proton donor) is an active-site residue.

This sequence belongs to the glycosyl hydrolase 13 family.

The protein resides in the cytoplasm. The enzyme catalyses Hydrolysis of (1-&gt;6)-alpha-D-glucosidic linkages in some oligosaccharides produced from starch and glycogen by alpha-amylase, and in isomaltose.. This chain is Oligo-1,6-glucosidase (malL), found in Bacillus cereus.